The chain runs to 362 residues: 2-oxoglutarate-dependent dioxygenase lolO2 (362 aa).

A Fe2OG dioxygenase domain is found at 199 to 312 (TWNYFLGQPV…RYSLVFFGHL (114 aa)). Fe cation-binding residues include His-222, Asp-224, and His-280. Arg-303 provides a ligand contact to 2-oxoglutarate.

Belongs to the iron/ascorbate-dependent oxidoreductase family. The cofactor is Fe(2+).

It functions in the pathway alkaloid biosynthesis. In terms of biological role, 2-oxoglutarate-dependent dioxygenase; part of the gene cluster that mediates the biosynthesis of loline alkaloids, potent insecticidal agents composed of a pyrrolizidine ring system and an uncommon ether bridge linking carbons 2 and 7. Lolines are structurally differentiated by the various modifications of the L-amino group and include norloline, loline, N-methylloline, N-acetylloline, N-acetylnorloline, and N-formylloline. The first committed step is the condensation of O-acetyl-L-homoserine (derived from L-aspartic acid) and L-proline, probably catalyzed by the gamma-type pyridoxal 5'-phosphate(PLP)-dependent enzyme lolC, to give the diamino diacid, NACPP. Ensuing cyclization, decarboxylation, and acetylation steps yield 1-exo-acetamidopyrrolizidine (AcAP). LolO is required for installation of the ether bridge upon the pathway intermediate, 1-exo-acetamidopyrrolizidine (AcAP). In sequential 2-oxoglutarate- and O(2)-consuming steps, lolO removes hydrogens from C2 and C7 of AcAP to form both carbon-oxygen bonds in N-acetylnorloline (NANL), the precursor to all other lolines. The enzymes lolD, lolE, lolF and lolT have also been proposed to be involved in the ether-bridge installation. Further processing of the exocyclic moiety of NANL by fungal N-acetamidase (LolN), methyltransferase (LolM), and cytochrome P450 (LolP) enzymes, with occasional involvement of a plant acetyltransferase, generates the other known lolines. LolN transforms NANL to norlonine which is monomethylated and dimethylated to respectively lonine and N-methyllonine (NML) by lolM. LolP catalyzes hydroxylation of the methyl group in N-methylloline (NML) and further oxygenation to N-formylloline (NFL). A plant acetyltransferase is responsible for the acetylation of loline to form N-acetylloline (NAL). LolA might interact with aspartate kinase to prevent feedback inhibition of its activity by these end products and thereby promote production of L-homoserine from L-aspartate. This chain is 2-oxoglutarate-dependent dioxygenase lolO2, found in Epichloe uncinata (Endophyte fungus).